The primary structure comprises 116 residues: Large ribosomal subunit protein bL19c (116 aa).

Belongs to the bacterial ribosomal protein bL19 family.

It is found in the plastid. The protein localises to the chloroplast. In Cyanidium caldarium (Red alga), this protein is Large ribosomal subunit protein bL19c.